The primary structure comprises 496 residues: Probable cytosol aminopeptidase (496 aa).

Residues K261 and D266 each coordinate Mn(2+). Residue K273 is part of the active site. Mn(2+) contacts are provided by D284, D343, and E345. The active site involves R347.

It belongs to the peptidase M17 family. Mn(2+) serves as cofactor.

The protein resides in the cytoplasm. It carries out the reaction Release of an N-terminal amino acid, Xaa-|-Yaa-, in which Xaa is preferably Leu, but may be other amino acids including Pro although not Arg or Lys, and Yaa may be Pro. Amino acid amides and methyl esters are also readily hydrolyzed, but rates on arylamides are exceedingly low.. The catalysed reaction is Release of an N-terminal amino acid, preferentially leucine, but not glutamic or aspartic acids.. In terms of biological role, presumably involved in the processing and regular turnover of intracellular proteins. Catalyzes the removal of unsubstituted N-terminal amino acids from various peptides. This Bacillus licheniformis (strain ATCC 14580 / DSM 13 / JCM 2505 / CCUG 7422 / NBRC 12200 / NCIMB 9375 / NCTC 10341 / NRRL NRS-1264 / Gibson 46) protein is Probable cytosol aminopeptidase.